Reading from the N-terminus, the 220-residue chain is Deoxyribose-phosphate aldolase 1 (220 aa).

Residue D89 is the Proton donor/acceptor of the active site. Catalysis depends on K151, which acts as the Schiff-base intermediate with acetaldehyde. K180 functions as the Proton donor/acceptor in the catalytic mechanism.

It belongs to the DeoC/FbaB aldolase family. DeoC type 1 subfamily.

It is found in the cytoplasm. The enzyme catalyses 2-deoxy-D-ribose 5-phosphate = D-glyceraldehyde 3-phosphate + acetaldehyde. It functions in the pathway carbohydrate degradation; 2-deoxy-D-ribose 1-phosphate degradation; D-glyceraldehyde 3-phosphate and acetaldehyde from 2-deoxy-alpha-D-ribose 1-phosphate: step 2/2. In terms of biological role, catalyzes a reversible aldol reaction between acetaldehyde and D-glyceraldehyde 3-phosphate to generate 2-deoxy-D-ribose 5-phosphate. The sequence is that of Deoxyribose-phosphate aldolase 1 from Staphylococcus aureus (strain MSSA476).